A 198-amino-acid chain; its full sequence is dITP/XTP pyrophosphatase (198 aa).

Threonine 11 to lysine 16 provides a ligand contact to substrate. Positions 44 and 73 each coordinate Mg(2+). Aspartate 73 (proton acceptor) is an active-site residue. Substrate is bound by residues serine 74, phenylalanine 156–aspartate 159, lysine 179, and histidine 184–arginine 185.

This sequence belongs to the HAM1 NTPase family. Homodimer. Requires Mg(2+) as cofactor.

The enzyme catalyses XTP + H2O = XMP + diphosphate + H(+). It carries out the reaction dITP + H2O = dIMP + diphosphate + H(+). The catalysed reaction is ITP + H2O = IMP + diphosphate + H(+). Its function is as follows. Pyrophosphatase that catalyzes the hydrolysis of nucleoside triphosphates to their monophosphate derivatives, with a high preference for the non-canonical purine nucleotides XTP (xanthosine triphosphate), dITP (deoxyinosine triphosphate) and ITP. Seems to function as a house-cleaning enzyme that removes non-canonical purine nucleotides from the nucleotide pool, thus preventing their incorporation into DNA/RNA and avoiding chromosomal lesions. The sequence is that of dITP/XTP pyrophosphatase (ysnA) from Bacillus subtilis (strain 168).